The sequence spans 209 residues: tRNA (guanine-N(7)-)-methyltransferase (209 aa).

S-adenosyl-L-methionine contacts are provided by aspartate 35, glutamate 60, asparagine 87, and aspartate 113. Residue aspartate 113 is part of the active site. Substrate contacts are provided by lysine 117 and aspartate 149.

The protein belongs to the class I-like SAM-binding methyltransferase superfamily. TrmB family.

It catalyses the reaction guanosine(46) in tRNA + S-adenosyl-L-methionine = N(7)-methylguanosine(46) in tRNA + S-adenosyl-L-homocysteine. Its pathway is tRNA modification; N(7)-methylguanine-tRNA biosynthesis. Functionally, catalyzes the formation of N(7)-methylguanine at position 46 (m7G46) in tRNA. This is tRNA (guanine-N(7)-)-methyltransferase from Prochlorococcus marinus (strain AS9601).